Here is a 557-residue protein sequence, read N- to C-terminus: Probable tRNA-splicing endonuclease subunit tsp-5 (557 aa).

Disordered regions lie at residues 1 to 36 (MPLD…MMDE), 131 to 152 (KLTK…DRKL), 225 to 252 (SVPA…EDDD), 370 to 403 (PSST…SDSP), and 514 to 557 (SGGP…GRGN). Over residues 131-140 (KLTKRGKEGA) the composition is skewed to basic and acidic residues. The segment covering 370–381 (PSSTSSSASPTA) has biased composition (low complexity). 2 stretches are compositionally biased toward gly residues: residues 517-527 (PRRGGGGGGKK) and 538-549 (GRGGGRGGGRGG).

This sequence belongs to the SEN54 family. In terms of assembly, tRNA splicing endonuclease is a heterotetramer composed of tsp-2/sen2, tsp-1/sen15, tsp-4/sen34 and tsp-5/sen54. Interacts directly with tsp-2/sen2.

In terms of biological role, non-catalytic subunit of the tRNA-splicing endonuclease complex, a complex responsible for identification and cleavage of the splice sites in pre-tRNA. It cleaves pre-tRNA at the 5' and 3' splice sites to release the intron. The products are an intron and two tRNA half-molecules bearing 2',3' cyclic phosphate and 5'-OH termini. There are no conserved sequences at the splice sites, but the intron is invariably located at the same site in the gene, placing the splice sites an invariant distance from the constant structural features of the tRNA body. May be required to embody the molecular ruler of the complex. The sequence is that of Probable tRNA-splicing endonuclease subunit tsp-5 (tsp-5) from Neurospora crassa (strain ATCC 24698 / 74-OR23-1A / CBS 708.71 / DSM 1257 / FGSC 987).